The primary structure comprises 82 residues: Polyketide biosynthesis acyl-carrier-protein AcpK (82 aa).

The Carrier domain occupies 4–79; that stretch reads QRIFEVLITN…ELAEVLYDKV (76 aa). Serine 39 carries the O-(pantetheine 4'-phosphoryl)serine modification.

4'-phosphopantetheine is transferred from CoA to a specific serine of apo-ACP by sfp.

It localises to the cytoplasm. It functions in the pathway antibiotic biosynthesis; bacillaene biosynthesis. Its function is as follows. Involved in some intermediate steps for the synthesis of the antibiotic polyketide bacillaene which is involved in secondary metabolism. The protein is Polyketide biosynthesis acyl-carrier-protein AcpK (acpK) of Bacillus subtilis (strain 168).